Reading from the N-terminus, the 322-residue chain is DNA-directed RNA polymerase subunit alpha (322 aa).

The segment at 1–229 is alpha N-terminal domain (alpha-NTD); sequence MNFVNNLFTL…KYFDLIFSFI (229 aa). Residues 244 to 322 form an alpha C-terminal domain (alpha-CTD) region; it reads NLNLKINSVY…NLNSKIEYDL (79 aa).

Belongs to the RNA polymerase alpha chain family. As to quaternary structure, homodimer. The RNAP catalytic core consists of 2 alpha, 1 beta, 1 beta' and 1 omega subunit. When a sigma factor is associated with the core the holoenzyme is formed, which can initiate transcription.

The enzyme catalyses RNA(n) + a ribonucleoside 5'-triphosphate = RNA(n+1) + diphosphate. Functionally, DNA-dependent RNA polymerase catalyzes the transcription of DNA into RNA using the four ribonucleoside triphosphates as substrates. The polypeptide is DNA-directed RNA polymerase subunit alpha (rpoA) (Carsonella ruddii (strain PV)).